We begin with the raw amino-acid sequence, 70 residues long: Brevinin-1CG3 (70 aa).

An N-terminal signal peptide occupies residues 1–22 (MFTLKKSLLLLFFLGTINLSLC). A propeptide spans 23–44 (EQERNAEEERRDDSDKRDVEVE) (removed in mature form). The cysteines at positions 64 and 70 are disulfide-linked.

The protein belongs to the frog skin active peptide (FSAP) family. Brevinin subfamily. As to expression, expressed by the skin glands.

Its subcellular location is the secreted. Its function is as follows. Antimicrobial peptide active against a variety of Gram-positive and some Gram-negative bacterial strains. Has antifungal activity against a slime mold isolate. Has hemolytic activity against human erythrocytes. This Amolops chunganensis (Chungan torrent frog) protein is Brevinin-1CG3.